The sequence spans 644 residues: Probable lysophospholipase 2 (644 aa).

Residues 1–19 (MYFQSFYFLALLLATAVYG) form the signal peptide. N-linked (GlcNAc...) asparagine glycosylation is found at Asn44, Asn96, Asn141, Asn178, Asn221, Asn245, Asn253, Asn281, Asn286, Asn316, Asn319, Asn373, Asn393, Asn449, Asn501, Asn558, Asn579, and Asn596. In terms of domain architecture, PLA2c spans 53–600 (SCDSSEIMVN…SQYCWNGTVD (548 aa)).

Belongs to the lysophospholipase family.

The protein resides in the secreted. It carries out the reaction a 1-acyl-sn-glycero-3-phosphocholine + H2O = sn-glycerol 3-phosphocholine + a fatty acid + H(+). Catalyzes the release of fatty acids from lysophospholipids. The chain is Probable lysophospholipase 2 (plb2) from Schizosaccharomyces pombe (strain 972 / ATCC 24843) (Fission yeast).